We begin with the raw amino-acid sequence, 566 residues long: Glutamate--tRNA ligase (566 aa).

A 'HIGH' region motif is present at residues P104 to N114.

Belongs to the class-I aminoacyl-tRNA synthetase family. Glutamate--tRNA ligase type 2 subfamily.

It localises to the cytoplasm. It catalyses the reaction tRNA(Glu) + L-glutamate + ATP = L-glutamyl-tRNA(Glu) + AMP + diphosphate. Its function is as follows. Catalyzes the attachment of glutamate to tRNA(Glu) in a two-step reaction: glutamate is first activated by ATP to form Glu-AMP and then transferred to the acceptor end of tRNA(Glu). In Metallosphaera sedula (strain ATCC 51363 / DSM 5348 / JCM 9185 / NBRC 15509 / TH2), this protein is Glutamate--tRNA ligase.